The following is a 274-amino-acid chain: 4-diphosphocytidyl-2-C-methyl-D-erythritol kinase (274 aa).

Residue Lys-8 is part of the active site. 94–104 (PSGAGLGGGSA) is a binding site for ATP. Asp-136 is a catalytic residue.

This sequence belongs to the GHMP kinase family. IspE subfamily.

The enzyme catalyses 4-CDP-2-C-methyl-D-erythritol + ATP = 4-CDP-2-C-methyl-D-erythritol 2-phosphate + ADP + H(+). It functions in the pathway isoprenoid biosynthesis; isopentenyl diphosphate biosynthesis via DXP pathway; isopentenyl diphosphate from 1-deoxy-D-xylulose 5-phosphate: step 3/6. Its function is as follows. Catalyzes the phosphorylation of the position 2 hydroxy group of 4-diphosphocytidyl-2C-methyl-D-erythritol. This is 4-diphosphocytidyl-2-C-methyl-D-erythritol kinase from Bacteroides fragilis (strain YCH46).